Consider the following 93-residue polypeptide: U12-lycotoxin-Ls1a (93 aa).

An N-terminal signal peptide occupies residues 1-18; it reads MKFAVILLFSLVVLTVAS. A propeptide spanning residues 19–38 is cleaved from the precursor; that stretch reads ESVEEVRREIDIEDLPEQQR.

This sequence belongs to the neurotoxin 31 family. Post-translationally, contains 5 disulfide bonds. In terms of tissue distribution, expressed by the venom gland.

Its subcellular location is the secreted. This Lycosa singoriensis (Wolf spider) protein is U12-lycotoxin-Ls1a.